Reading from the N-terminus, the 308-residue chain is Porphobilinogen deaminase (308 aa).

Cys242 carries the S-(dipyrrolylmethanemethyl)cysteine modification.

This sequence belongs to the HMBS family. In terms of assembly, monomer. Dipyrromethane is required as a cofactor.

The catalysed reaction is 4 porphobilinogen + H2O = hydroxymethylbilane + 4 NH4(+). It functions in the pathway porphyrin-containing compound metabolism; protoporphyrin-IX biosynthesis; coproporphyrinogen-III from 5-aminolevulinate: step 2/4. Its function is as follows. Tetrapolymerization of the monopyrrole PBG into the hydroxymethylbilane pre-uroporphyrinogen in several discrete steps. This is Porphobilinogen deaminase from Alkalilimnicola ehrlichii (strain ATCC BAA-1101 / DSM 17681 / MLHE-1).